The sequence spans 86 residues: Small ribosomal subunit protein bS20 (86 aa).

A disordered region spans residues 1-23; sequence MANIKSSKKDSIKSRKKKKLNAS.

It belongs to the bacterial ribosomal protein bS20 family.

Functionally, binds directly to 16S ribosomal RNA. The polypeptide is Small ribosomal subunit protein bS20 (Buchnera aphidicola subsp. Baizongia pistaciae (strain Bp)).